A 483-amino-acid chain; its full sequence is Glycogen synthase kinase-3 alpha (483 aa).

A compositionally biased stretch (gly residues) spans 1-15; sequence MSGGGPSGGGPGGSG. The disordered stretch occupies residues 1–96; sequence MSGGGPSGGG…PPPGVKLGRD (96 aa). An N-acetylserine modification is found at serine 2. Serine 2 bears the Phosphoserine mark. Serine 21 carries the phosphoserine; by PKB/AKT1 modification. Residues 25-82 show a composition bias toward gly residues; sequence PGGGGGGGGGGPGGSASGPGGTGGGKASVGAMGGGVGASSSGGGPSGSGGGGSGGPGA. Serine 72, serine 77, and serine 97 each carry phosphoserine. The region spanning 119 to 403 is the Protein kinase domain; sequence YTDIKVIGNG…PLEACAHSFF (285 aa). ATP is bound by residues 125-133 and lysine 148; that span reads IGNGSFGVV. The active-site Proton acceptor is aspartate 244. Position 279 is a phosphotyrosine (tyrosine 279). Residues 443 to 483 form a disordered region; it reads PHLRSPSGPATLTSSSQALTETQTGQDWQAPDATPTLTNSS. A compositionally biased stretch (polar residues) spans 450-469; it reads GPATLTSSSQALTETQTGQD.

It belongs to the protein kinase superfamily. CMGC Ser/Thr protein kinase family. GSK-3 subfamily. In terms of assembly, monomer. Interacts with ARRB2, AXIN1 and CTNNB1/beta-catenin. Interacts with CTNND2. Interacts with LMBR1L. Interacts with DDX3X. Interacts with TNFRSF10B. Post-translationally, phosphorylated by AKT1 at Ser-21: upon insulin-mediated signaling, the activated PKB/AKT1 protein kinase phosphorylates and deactivates GSK3A, resulting in the dephosphorylation and activation of GYS1. Activated by phosphorylation at Tyr-279.

The catalysed reaction is L-seryl-[tau protein] + ATP = O-phospho-L-seryl-[tau protein] + ADP + H(+). It carries out the reaction L-threonyl-[tau protein] + ATP = O-phospho-L-threonyl-[tau protein] + ADP + H(+). It catalyses the reaction L-seryl-[protein] + ATP = O-phospho-L-seryl-[protein] + ADP + H(+). The enzyme catalyses L-threonyl-[protein] + ATP = O-phospho-L-threonyl-[protein] + ADP + H(+). Activated by phosphorylation at Tyr-279. In response to insulin, inhibited by phosphorylation at Ser-21 by PKB/AKT1; phosphorylation at this site causes a conformational change, preventing access of substrates to the active site. Inhibited by lithium. Functionally, constitutively active protein kinase that acts as a negative regulator in the hormonal control of glucose homeostasis, Wnt signaling and regulation of transcription factors and microtubules, by phosphorylating and inactivating glycogen synthase (GYS1 or GYS2), CTNNB1/beta-catenin, APC and AXIN1. Requires primed phosphorylation of the majority of its substrates. Contributes to insulin regulation of glycogen synthesis by phosphorylating and inhibiting GYS1 activity and hence glycogen synthesis. Regulates glycogen metabolism in liver, but not in muscle. May also mediate the development of insulin resistance by regulating activation of transcription factors. In Wnt signaling, regulates the level and transcriptional activity of nuclear CTNNB1/beta-catenin. Facilitates amyloid precursor protein (APP) processing and the generation of APP-derived amyloid plaques found in Alzheimer disease. May be involved in the regulation of replication in pancreatic beta-cells. Is necessary for the establishment of neuronal polarity and axon outgrowth. Through phosphorylation of the anti-apoptotic protein MCL1, may control cell apoptosis in response to growth factors deprivation. Acts as a regulator of autophagy by mediating phosphorylation of KAT5/TIP60 under starvation conditions, activating KAT5/TIP60 acetyltransferase activity and promoting acetylation of key autophagy regulators, such as ULK1 and RUBCNL/Pacer. Negatively regulates extrinsic apoptotic signaling pathway via death domain receptors. Promotes the formation of an anti-apoptotic complex, made of DDX3X, BRIC2 and GSK3B, at death receptors, including TNFRSF10B. The anti-apoptotic function is most effective with weak apoptotic signals and can be overcome by stronger stimulation. The sequence is that of Glycogen synthase kinase-3 alpha (Gsk3a) from Rattus norvegicus (Rat).